We begin with the raw amino-acid sequence, 92 residues long: Small ribosomal subunit protein uS19 (92 aa).

Belongs to the universal ribosomal protein uS19 family.

Protein S19 forms a complex with S13 that binds strongly to the 16S ribosomal RNA. In Corynebacterium aurimucosum (strain ATCC 700975 / DSM 44827 / CIP 107346 / CN-1) (Corynebacterium nigricans), this protein is Small ribosomal subunit protein uS19.